Consider the following 95-residue polypeptide: Ribonuclease kappa (95 aa).

2 consecutive transmembrane segments (helical) span residues 12 to 32 (GLII…FFYI) and 68 to 88 (CWIA…QFYM).

The protein belongs to the RNase K family.

The protein resides in the membrane. Functionally, endoribonuclease. Its function is as follows. (Microbial infection) Required for the initial stages of clathrin-mediated endocytic uptake of a diverse set of flaviviruses, including dengue and West Nile. Not required for clathrin-mediated endocytosis and macropinocytosis. This Drosophila melanogaster (Fruit fly) protein is Ribonuclease kappa.